The primary structure comprises 72 residues: Alpha-elapitoxin-Ast2b (72 aa).

5 disulfides stabilise this stretch: C3–C20, C13–C41, C26–C30, C45–C56, and C57–C62. Residue R72 is modified to Arginine amide.

The protein belongs to the three-finger toxin family. Long-chain subfamily. Type II alpha-neurotoxin sub-subfamily. Expressed by the venom gland.

The protein localises to the secreted. Binds with high affinity to muscular (alpha-1/CHRNA1) and neuronal (alpha-7/CHRNA7) nicotinic acetylcholine receptor (nAChR) and inhibits acetylcholine from binding to the receptor, thereby impairing neuromuscular and neuronal transmission. This chain is Alpha-elapitoxin-Ast2b, found in Hydrophis stokesii (Stokes's sea snake).